The primary structure comprises 41 residues: Phospholipase A2 homolog nigroviriditoxin acidic subunit A (41 aa).

Belongs to the phospholipase A2 family. Group II subfamily. D49 sub-subfamily. In terms of assembly, nigroviriditoxin is a heterodimer of an acidic subunit A and a basic subunit B. In terms of tissue distribution, expressed by the venom gland.

The protein resides in the secreted. Its function is as follows. Heterodimer A-B: Nigroviriditoxin possesses phospholipase A2 (PLA2) activity. It consists of a non-covalent association of a basic PLA2 subunit B with a non-enzymatic subunit A. In terms of biological role, subunit A: The acidic subunit of nigroviriditoxin probably is a heterotrimer of three disulfide-linked chains generated by post-translational maturation of a PLA2-like precursor. It appears to have no PLA2 activity of its own, instead inhibiting the catalytic activity of subunit B. It is not toxic to mice by itself but increases toxicity of subunit B. The polypeptide is Phospholipase A2 homolog nigroviriditoxin acidic subunit A (Bothriechis nigroviridis (Black-speckled palm pit viper)).